The following is a 347-amino-acid chain: Protease HtpX homolog (347 aa).

Transmembrane regions (helical) follow at residues 8–28, 44–64, 76–96, and 141–163; these read VALG…ATIA, AMAL…YLFV, LSFL…TYFA, and AFAY…LALT. H174 contacts Zn(2+). E175 is an active-site residue. H178 contributes to the Zn(2+) binding site. 2 consecutive transmembrane segments (helical) span residues 185-205 and 221-241; these read AIML…VTAV and ILAA…LLVL. Residue E248 coordinates Zn(2+).

This sequence belongs to the peptidase M48B family. It depends on Zn(2+) as a cofactor.

It is found in the cell membrane. The protein is Protease HtpX homolog of Pyrobaculum aerophilum (strain ATCC 51768 / DSM 7523 / JCM 9630 / CIP 104966 / NBRC 100827 / IM2).